Here is a 314-residue protein sequence, read N- to C-terminus: DNA-directed RNA polymerase subunit alpha (314 aa).

An alpha N-terminal domain (alpha-NTD) region spans residues Met-1–Thr-228. Positions Glu-246–Asp-314 are alpha C-terminal domain (alpha-CTD).

The protein belongs to the RNA polymerase alpha chain family. In terms of assembly, homodimer. The RNAP catalytic core consists of 2 alpha, 1 beta, 1 beta' and 1 omega subunit. When a sigma factor is associated with the core the holoenzyme is formed, which can initiate transcription.

The enzyme catalyses RNA(n) + a ribonucleoside 5'-triphosphate = RNA(n+1) + diphosphate. Its function is as follows. DNA-dependent RNA polymerase catalyzes the transcription of DNA into RNA using the four ribonucleoside triphosphates as substrates. The chain is DNA-directed RNA polymerase subunit alpha from Bacillus pumilus (strain SAFR-032).